The primary structure comprises 239 residues: Lactate utilization protein A 2 (239 aa).

This sequence belongs to the LutA/YkgE family.

Is involved in L-lactate degradation and allows cells to grow with lactate as the sole carbon source. This chain is Lactate utilization protein A 2, found in Bacillus mycoides (strain KBAB4) (Bacillus weihenstephanensis).